Consider the following 177-residue polypeptide: Large ribosomal subunit protein uL6 (177 aa).

Belongs to the universal ribosomal protein uL6 family. Part of the 50S ribosomal subunit.

Functionally, this protein binds to the 23S rRNA, and is important in its secondary structure. It is located near the subunit interface in the base of the L7/L12 stalk, and near the tRNA binding site of the peptidyltransferase center. The sequence is that of Large ribosomal subunit protein uL6 from Chromobacterium violaceum (strain ATCC 12472 / DSM 30191 / JCM 1249 / CCUG 213 / NBRC 12614 / NCIMB 9131 / NCTC 9757 / MK).